The sequence spans 86 residues: Large ribosomal subunit protein uL10 (86 aa).

It belongs to the universal ribosomal protein uL10 family. As to quaternary structure, part of the ribosomal stalk of the 50S ribosomal subunit. The N-terminus interacts with L11 and the large rRNA to form the base of the stalk. The C-terminus forms an elongated spine to which L12 dimers bind in a sequential fashion forming a multimeric L10(L12)X complex.

Forms part of the ribosomal stalk, playing a central role in the interaction of the ribosome with GTP-bound translation factors. This chain is Large ribosomal subunit protein uL10 (rplJ), found in Serratia marcescens.